Here is a 220-residue protein sequence, read N- to C-terminus: Large ribosomal subunit protein uL3 (220 aa).

This sequence belongs to the universal ribosomal protein uL3 family. As to quaternary structure, part of the 50S ribosomal subunit. Forms a cluster with proteins L14 and L19.

Its function is as follows. One of the primary rRNA binding proteins, it binds directly near the 3'-end of the 23S rRNA, where it nucleates assembly of the 50S subunit. The sequence is that of Large ribosomal subunit protein uL3 from Staphylococcus haemolyticus (strain JCSC1435).